The primary structure comprises 283 residues: MNDSQRVSILSEALPYIQSFSGRKIVIKYGGSVMENDNLKNAFFRDIALLSTVGVCPIVIHGGGPEINNWLKKLEISPKFENGLRITDQKTMEIVEMVLMGRVNKQIVKGINKTGSLAVGISGLDGNLIQSRELGDGSHGLVGEVTKINPEILDPLISKGYIPIISSIGSTLEGISHNINADFVAGEIAAAINAEKLILLTDTQGILKEKDNKNSLVEKTNLKEARDFIDKKIVTEGMIPKTECCIRALAQGVKAAHIIDGRIEHSLLLEIFTNSGIGTMIVA.

Substrate-binding positions include 63 to 64 (GG), R85, and N178.

The protein belongs to the acetylglutamate kinase family. ArgB subfamily.

It is found in the cytoplasm. The catalysed reaction is N-acetyl-L-glutamate + ATP = N-acetyl-L-glutamyl 5-phosphate + ADP. It participates in amino-acid biosynthesis; L-arginine biosynthesis; N(2)-acetyl-L-ornithine from L-glutamate: step 2/4. Catalyzes the ATP-dependent phosphorylation of N-acetyl-L-glutamate. The chain is Acetylglutamate kinase from Prochlorococcus marinus (strain MIT 9215).